A 622-amino-acid polypeptide reads, in one-letter code: DNA-directed RNA polymerase subunit gamma (622 aa).

Zn(2+)-binding residues include Cys-70, Cys-72, Cys-85, and Cys-88. Residues Asp-466, Asp-468, and Asp-470 each contribute to the Mg(2+) site.

Belongs to the RNA polymerase beta' chain family. RpoC1 subfamily. In terms of assembly, in cyanobacteria the RNAP catalytic core is composed of 2 alpha, 1 beta, 1 beta', 1 gamma and 1 omega subunit. When a sigma factor is associated with the core the holoenzyme is formed, which can initiate transcription. It depends on Mg(2+) as a cofactor. Zn(2+) serves as cofactor.

The catalysed reaction is RNA(n) + a ribonucleoside 5'-triphosphate = RNA(n+1) + diphosphate. DNA-dependent RNA polymerase catalyzes the transcription of DNA into RNA using the four ribonucleoside triphosphates as substrates. This Thermosynechococcus vestitus (strain NIES-2133 / IAM M-273 / BP-1) protein is DNA-directed RNA polymerase subunit gamma.